Consider the following 213-residue polypeptide: Pyridoxine/pyridoxamine 5'-phosphate oxidase (213 aa).

FMN-binding positions include 60 to 65 (RMVLMK), 75 to 76 (YS), Lys82, and Gln104. A substrate-binding site is contributed by Lys65. 3 residues coordinate substrate: Tyr122, Arg126, and Ser130. Residues 139–140 (QS) and Trp184 each bind FMN. 190–192 (RLH) contributes to the substrate binding site. An FMN-binding site is contributed by Arg194.

This sequence belongs to the pyridoxamine 5'-phosphate oxidase family. As to quaternary structure, homodimer. Requires FMN as cofactor.

The catalysed reaction is pyridoxamine 5'-phosphate + O2 + H2O = pyridoxal 5'-phosphate + H2O2 + NH4(+). It catalyses the reaction pyridoxine 5'-phosphate + O2 = pyridoxal 5'-phosphate + H2O2. Its pathway is cofactor metabolism; pyridoxal 5'-phosphate salvage; pyridoxal 5'-phosphate from pyridoxamine 5'-phosphate: step 1/1. The protein operates within cofactor metabolism; pyridoxal 5'-phosphate salvage; pyridoxal 5'-phosphate from pyridoxine 5'-phosphate: step 1/1. In terms of biological role, catalyzes the oxidation of either pyridoxine 5'-phosphate (PNP) or pyridoxamine 5'-phosphate (PMP) into pyridoxal 5'-phosphate (PLP). The polypeptide is Pyridoxine/pyridoxamine 5'-phosphate oxidase (Rhodopseudomonas palustris (strain BisB18)).